The chain runs to 105 residues: Large ribosomal subunit protein bL21 (105 aa).

The protein belongs to the bacterial ribosomal protein bL21 family. Part of the 50S ribosomal subunit. Contacts protein L20.

Functionally, this protein binds to 23S rRNA in the presence of protein L20. The sequence is that of Large ribosomal subunit protein bL21 from Rickettsia bellii (strain OSU 85-389).